A 427-amino-acid chain; its full sequence is Phosphatidylserine decarboxylase proenzyme 1, mitochondrial (427 aa).

A mitochondrion-targeting transit peptide spans 1-77 (MRSYLRFSDR…RRFVYKLDQA (77 aa)). The Mitochondrial matrix segment spans residues 78–88 (VTAALGPNGRY). The helical transmembrane segment at 89–107 (IAMVGMTASAVLLTFHYKF) threads the bilayer. The Mitochondrial intermembrane segment spans residues 108–427 (REVIAATDNV…TEDERLFAFY (320 aa)). Active-site charge relay system; for autoendoproteolytic cleavage activity residues include D210, H268, and S379. S379 serves as the catalytic Schiff-base intermediate with substrate; via pyruvic acid; for decarboxylase activity. S379 carries the pyruvic acid (Ser); by autocatalysis modification.

Belongs to the phosphatidylserine decarboxylase family. PSD-B subfamily. Eukaryotic type I sub-subfamily. Heterodimer of a large membrane-associated beta subunit and a small pyruvoyl-containing alpha subunit. The cofactor is pyruvate. Post-translationally, is synthesized initially as an inactive proenzyme. Formation of the active enzyme involves a self-maturation process in which the active site pyruvoyl group is generated from an internal serine residue via an autocatalytic post-translational modification. Two non-identical subunits are generated from the proenzyme in this reaction, and the pyruvate is formed at the N-terminus of the alpha chain, which is derived from the carboxyl end of the proenzyme. The autoendoproteolytic cleavage occurs by a canonical serine protease mechanism, in which the side chain hydroxyl group of the serine supplies its oxygen atom to form the C-terminus of the beta chain, while the remainder of the serine residue undergoes an oxidative deamination to produce ammonia and the pyruvoyl prosthetic group on the alpha chain. During this reaction, the Ser that is part of the protease active site of the proenzyme becomes the pyruvoyl prosthetic group, which constitutes an essential element of the active site of the mature decarboxylase.

It localises to the mitochondrion. The protein resides in the mitochondrion inner membrane. The catalysed reaction is a 1,2-diacyl-sn-glycero-3-phospho-L-serine + H(+) = a 1,2-diacyl-sn-glycero-3-phosphoethanolamine + CO2. It participates in phospholipid metabolism; phosphatidylethanolamine biosynthesis; phosphatidylethanolamine from CDP-diacylglycerol: step 2/2. In terms of biological role, catalyzes the formation of phosphatidylethanolamine (PtdEtn) from phosphatidylserine (PtdSer). Plays a central role in phospholipid metabolism and in the interorganelle trafficking of phosphatidylserine. This is Phosphatidylserine decarboxylase proenzyme 1, mitochondrial from Toxoplasma gondii (strain ATCC 50853 / GT1).